Here is a 140-residue protein sequence, read N- to C-terminus: Alpha-lactalbumin (140 aa).

A signal peptide spans 1 to 19 (MMSLLPLLLIGIVLPATQA). A C-type lysozyme domain is found at 20–140 (KDYGKCELNQ…CRENLDQWNC (121 aa)). 4 disulfides stabilise this stretch: Cys25-Cys140, Cys47-Cys131, Cys80-Cys96, and Cys92-Cys110. Ca(2+) contacts are provided by Lys98, Asp101, Asp103, Asp106, and Asp107.

In terms of assembly, lactose synthase (LS) is a heterodimer of a catalytic component, beta1,4-galactosyltransferase (beta4Gal-T1) and a regulatory component, alpha-lactalbumin (LA). In terms of tissue distribution, mammary gland specific. Secreted in milk.

Its subcellular location is the secreted. Functionally, regulatory subunit of lactose synthase, changes the substrate specificity of galactosyltransferase in the mammary gland making glucose a good acceptor substrate for this enzyme. This enables LS to synthesize lactose, the major carbohydrate component of milk. In other tissues, galactosyltransferase transfers galactose onto the N-acetylglucosamine of the oligosaccharide chains in glycoproteins. The chain is Alpha-lactalbumin (LALBA) from Trichosurus vulpecula (Brush-tailed possum).